The primary structure comprises 419 residues: Septin-2 (419 aa).

Residues 40 to 306 (NGFVFNVMCI…ELYRQKRLEQ (267 aa)) enclose the Septin-type G domain. The G1 motif stretch occupies residues 50–57 (GETGLGKS). GTP contacts are provided by residues 50 to 57 (GETGLGKS), S79, G105, 186 to 194 (KADTISKVE), G240, and R255. The G3 motif stretch occupies residues 102 to 105 (DTVG). The G4 motif stretch occupies residues 185–188 (AKAD). The interval 259–269 (WGTVQVENETH) is important for dimerization.

Belongs to the TRAFAC class TrmE-Era-EngA-EngB-Septin-like GTPase superfamily. Septin GTPase family. As to quaternary structure, may assemble into a multicomponent structure.

It localises to the cytoplasm. Its subcellular location is the cytoskeleton. The protein localises to the spindle. In terms of biological role, involved in cytokinesis. In Drosophila melanogaster (Fruit fly), this protein is Septin-2.